The following is a 97-amino-acid chain: Co-chaperonin GroES (97 aa).

The protein belongs to the GroES chaperonin family. As to quaternary structure, heptamer of 7 subunits arranged in a ring. Interacts with the chaperonin GroEL.

Its subcellular location is the cytoplasm. Its function is as follows. Together with the chaperonin GroEL, plays an essential role in assisting protein folding. The GroEL-GroES system forms a nano-cage that allows encapsulation of the non-native substrate proteins and provides a physical environment optimized to promote and accelerate protein folding. GroES binds to the apical surface of the GroEL ring, thereby capping the opening of the GroEL channel. The polypeptide is Co-chaperonin GroES (Erwinia tasmaniensis (strain DSM 17950 / CFBP 7177 / CIP 109463 / NCPPB 4357 / Et1/99)).